Here is a 407-residue protein sequence, read N- to C-terminus: uncharacterized protein (407 aa).

The Lumenal segment spans residues 1 to 290 (MPLNIIGTAL…SNSLRRVISN (290 aa)). The NADP(+) site is built by D114, K236, and S281. K236 serves as the catalytic Lowers pKa of active site Tyr. Residues 291-311 (GSVVLLIILYCILLYPILWLF) form a helical membrane-spanning segment. Over 312 to 407 (TKSGRRGDQS…KSQNKSRKDD (96 aa)) the chain is Cytoplasmic. The stretch at 361–390 (ELQKKLFDNTERDILQLEKKVAAKRNANKT) forms a coiled coil. The interval 383-407 (AKRNANKTGNQNSKKKSQNKSRKDD) is disordered. Over residues 395-407 (SKKKSQNKSRKDD) the composition is skewed to basic residues.

Belongs to the short-chain dehydrogenases/reductases (SDR) family.

It is found in the endoplasmic reticulum membrane. Functionally, may be involved in lipid metabolism. This is an uncharacterized protein from Saccharomyces cerevisiae (strain ATCC 204508 / S288c) (Baker's yeast).